A 226-amino-acid chain; its full sequence is Phosphate propanoyltransferase (226 aa).

44-46 (VSN) serves as a coordination point for CoA. The Zn(2+) site is built by His-48 and His-50. Residues Met-72, Lys-90, and Arg-97 each coordinate CoA. Position 103 (Arg-103) interacts with phosphate. Glu-109 is a Zn(2+) binding site. Position 116 (Phe-116) interacts with CoA. His-157, His-159, and His-204 together coordinate Zn(2+). Asn-211 provides a ligand contact to CoA.

Belongs to the PduL family. Full-length protein forms large oligomers. Homodimer, when purified in the absence of the encapsulation peptide (EP, residues 1-47). The EP may influence oligomerization. Zn(2+) serves as cofactor.

The protein localises to the bacterial microcompartment. The enzyme catalyses propanoyl-CoA + phosphate = propanoyl phosphate + CoA. Its pathway is polyol metabolism; 1,2-propanediol degradation. Involved in 1,2-propanediol (1,2-PD) utilization within the bacterial microcompartment (BMC) dedicated to 1,2-PD degradation by catalyzing the conversion of propanoyl-CoA to propanoyl-phosphate. CoA is regenerated within the pdu BMC (for use by PduP) via this enzyme, although there must also be cofactor transport across the BMC. Directly targeted to the BMC. Phosphate is probably the first substrate to bind in the forward direction. CoA is probably the first substrate to bind in the reverse direction, and might bind to the enzyme as the BMC assembles, ensuring cofactor encapsulation. The polypeptide is Phosphate propanoyltransferase (Rhodopseudomonas palustris (strain BisB18)).